The primary structure comprises 323 residues: GDSL esterase/lipase At5g03980 (323 aa).

Positions 1–21 (MSTTKALSLLVFILFVSLVHS) are cleaved as a signal peptide. The active-site Nucleophile is Ser36. Asn77 carries an N-linked (GlcNAc...) asparagine glycan. Active-site residues include Asp294 and His297.

It belongs to the 'GDSL' lipolytic enzyme family.

Its subcellular location is the secreted. The protein is GDSL esterase/lipase At5g03980 of Arabidopsis thaliana (Mouse-ear cress).